The primary structure comprises 520 residues: Aldehyde dehydrogenase 5, mitochondrial (520 aa).

The N-terminal 23 residues, 1–23, are a transit peptide targeting the mitochondrion; it reads MLSRTRAAAPNSRIFTRSLLRLY. 266–271 contributes to the NAD(+) binding site; that stretch reads GSTATG. The Proton acceptor role is filled by E288. C322 (nucleophile) is an active-site residue.

The protein belongs to the aldehyde dehydrogenase family.

It is found in the mitochondrion matrix. The enzyme catalyses an aldehyde + NADP(+) + H2O = a carboxylate + NADPH + 2 H(+). The catalysed reaction is an aldehyde + NAD(+) + H2O = a carboxylate + NADH + 2 H(+). The protein operates within alcohol metabolism; ethanol degradation; acetate from ethanol: step 2/2. Its activity is regulated as follows. Induced by potassium ions. In terms of biological role, minor mitochondrial aldehyde dehydrogenase isoform. Plays a role in regulation or biosynthesis of electron transport chain components. Involved in the biosynthesis of acetate during anaerobic growth on glucose. This is Aldehyde dehydrogenase 5, mitochondrial (ALD5) from Saccharomyces cerevisiae (strain YJM789) (Baker's yeast).